The sequence spans 403 residues: Tryptophan synthase beta chain 1 (403 aa).

K96 carries the N6-(pyridoxal phosphate)lysine modification.

Belongs to the TrpB family. As to quaternary structure, tetramer of two alpha and two beta chains. Requires pyridoxal 5'-phosphate as cofactor.

It catalyses the reaction (1S,2R)-1-C-(indol-3-yl)glycerol 3-phosphate + L-serine = D-glyceraldehyde 3-phosphate + L-tryptophan + H2O. The protein operates within amino-acid biosynthesis; L-tryptophan biosynthesis; L-tryptophan from chorismate: step 5/5. The beta subunit is responsible for the synthesis of L-tryptophan from indole and L-serine. In Wolinella succinogenes (strain ATCC 29543 / DSM 1740 / CCUG 13145 / JCM 31913 / LMG 7466 / NCTC 11488 / FDC 602W) (Vibrio succinogenes), this protein is Tryptophan synthase beta chain 1 (trpB1).